Reading from the N-terminus, the 141-residue chain is Hemoglobin subunit alpha-D (141 aa).

The Globin domain occupies 1 to 141 (MLTEDEKQLI…VSAVLAEKYR (141 aa)). 2 residues coordinate heme b: H58 and H87.

Belongs to the globin family. Heterotetramer of two alpha-D chains and two beta chains. In terms of tissue distribution, red blood cells.

Functionally, involved in oxygen transport from the lung to the various peripheral tissues. The sequence is that of Hemoglobin subunit alpha-D (HBAD) from Chelonoidis carbonarius (Red-footed tortoise).